A 253-amino-acid polypeptide reads, in one-letter code: Imidazole glycerol phosphate synthase subunit HisF (253 aa).

Catalysis depends on residues aspartate 11 and aspartate 130.

It belongs to the HisA/HisF family. Heterodimer of HisH and HisF.

Its subcellular location is the cytoplasm. It carries out the reaction 5-[(5-phospho-1-deoxy-D-ribulos-1-ylimino)methylamino]-1-(5-phospho-beta-D-ribosyl)imidazole-4-carboxamide + L-glutamine = D-erythro-1-(imidazol-4-yl)glycerol 3-phosphate + 5-amino-1-(5-phospho-beta-D-ribosyl)imidazole-4-carboxamide + L-glutamate + H(+). It functions in the pathway amino-acid biosynthesis; L-histidine biosynthesis; L-histidine from 5-phospho-alpha-D-ribose 1-diphosphate: step 5/9. Functionally, IGPS catalyzes the conversion of PRFAR and glutamine to IGP, AICAR and glutamate. The HisF subunit catalyzes the cyclization activity that produces IGP and AICAR from PRFAR using the ammonia provided by the HisH subunit. The protein is Imidazole glycerol phosphate synthase subunit HisF of Ruminiclostridium cellulolyticum (strain ATCC 35319 / DSM 5812 / JCM 6584 / H10) (Clostridium cellulolyticum).